Reading from the N-terminus, the 405-residue chain is Indoleamine 2,3-dioxygenase acdA (405 aa).

His312 lines the heme pocket.

It belongs to the indoleamine 2,3-dioxygenase family. Heme is required as a cofactor.

The enzyme catalyses L-tryptophan + O2 = N-formyl-L-kynurenine. The protein operates within secondary metabolite biosynthesis. Functionally, indoleamine 2,3-dioxygenase; part of the gene cluster that mediates the biosynthesis of aspcandine, a pyrrolobenzazepine alkaloid. Initially, the indoleamine 2,3-dioxygenase acdA accepts L-tryptophan and performs the oxidative opening of the indole ring to yield N'-formyl-L-kynurenine, which undergoes the spontaneous deformylation reaction to provide L-kynurenine. The kynurenine 3-monooxygenase acdD then hydroxylates L-kynurenine to afford 3-hydroxy-L-kynurenine. 3-hydroxy-L-kynurenine is activated by the A domain of the NRPS-PKS acdB and subsequently loaded onto the enzyme. The KS domain conducts the decarboxylative condensation of the 3-hydroxy-L-kynurenyl and malonyl moieties, and subsequent nucleophilic attacks by the two amino groups would occur nonenzymatically at two distinct positions, achieving the chain release and the construction of the tricyclic system. Finally, a dehydration reaction completes the biosynthesis to yield aspcandine. The sequence is that of Indoleamine 2,3-dioxygenase acdA from Aspergillus candidus.